Reading from the N-terminus, the 415-residue chain is N-succinylarginine dihydrolase (415 aa).

Substrate is bound by residues 18-27 (AGLSRGNIAS), Asn-100, and 127-128 (HR). Glu-161 is an active-site residue. Arg-193 contacts substrate. His-229 is a catalytic residue. 2 residues coordinate substrate: Asp-231 and Asn-340. The Nucleophile role is filled by Cys-346.

The protein belongs to the succinylarginine dihydrolase family. In terms of assembly, homodimer.

It catalyses the reaction N(2)-succinyl-L-arginine + 2 H2O + 2 H(+) = N(2)-succinyl-L-ornithine + 2 NH4(+) + CO2. It participates in amino-acid degradation; L-arginine degradation via AST pathway; L-glutamate and succinate from L-arginine: step 2/5. Catalyzes the hydrolysis of N(2)-succinylarginine into N(2)-succinylornithine, ammonia and CO(2). In Sphingopyxis alaskensis (strain DSM 13593 / LMG 18877 / RB2256) (Sphingomonas alaskensis), this protein is N-succinylarginine dihydrolase.